A 382-amino-acid polypeptide reads, in one-letter code: Galactokinase (382 aa).

34 to 37 lines the substrate pocket; the sequence is EHTD. 124-130 is an ATP binding site; it reads GAGLSSS. Ser130 and Glu162 together coordinate Mg(2+). Asp174 (proton acceptor) is an active-site residue. Tyr223 provides a ligand contact to substrate.

Belongs to the GHMP kinase family. GalK subfamily.

It localises to the cytoplasm. It carries out the reaction alpha-D-galactose + ATP = alpha-D-galactose 1-phosphate + ADP + H(+). It participates in carbohydrate metabolism; galactose metabolism. In terms of biological role, catalyzes the transfer of the gamma-phosphate of ATP to D-galactose to form alpha-D-galactose-1-phosphate (Gal-1-P). This Escherichia coli O7:K1 (strain IAI39 / ExPEC) protein is Galactokinase.